A 270-amino-acid chain; its full sequence is Phosphatidylglycerol--prolipoprotein diacylglyceryl transferase (270 aa).

A run of 7 helical transmembrane segments spans residues 17–37, 59–79, 95–115, 129–149, 175–195, 202–222, and 237–257; these read LAIR…LWFG, MLFY…VLFY, WEGG…MWVF, FIAP…FING, PSQL…LWLF, MGAV…LAEF, and LSMG…MVVW. Residue arginine 142 participates in a 1,2-diacyl-sn-glycero-3-phospho-(1'-sn-glycerol) binding.

It belongs to the Lgt family.

The protein localises to the cell inner membrane. It carries out the reaction L-cysteinyl-[prolipoprotein] + a 1,2-diacyl-sn-glycero-3-phospho-(1'-sn-glycerol) = an S-1,2-diacyl-sn-glyceryl-L-cysteinyl-[prolipoprotein] + sn-glycerol 1-phosphate + H(+). It participates in protein modification; lipoprotein biosynthesis (diacylglyceryl transfer). In terms of biological role, catalyzes the transfer of the diacylglyceryl group from phosphatidylglycerol to the sulfhydryl group of the N-terminal cysteine of a prolipoprotein, the first step in the formation of mature lipoproteins. The polypeptide is Phosphatidylglycerol--prolipoprotein diacylglyceryl transferase (Cupriavidus metallidurans (strain ATCC 43123 / DSM 2839 / NBRC 102507 / CH34) (Ralstonia metallidurans)).